The primary structure comprises 766 residues: Protein transport protein Sec23B (766 aa).

The residue at position 2 (alanine 2) is an N-acetylalanine. 4 residues coordinate Zn(2+): cysteine 61, cysteine 66, cysteine 85, and cysteine 88. An N6-acetyllysine modification is found at lysine 564. One copy of the Gelsolin-like repeat lies at 633-719; the sequence is PEPVLLDSSS…EHGGSQARFL (87 aa).

The protein belongs to the SEC23/SEC24 family. SEC23 subfamily. In terms of assembly, COPII is composed of at least five proteins: the Sec23/24 complex, the Sec13/31 complex and Sar1. Interacts with SAR1A.

It localises to the cytoplasmic vesicle. The protein resides in the COPII-coated vesicle membrane. Its subcellular location is the endoplasmic reticulum membrane. The protein localises to the cytoplasm. It is found in the cytosol. Its function is as follows. Component of the coat protein complex II (COPII) which promotes the formation of transport vesicles from the endoplasmic reticulum (ER). The coat has two main functions, the physical deformation of the endoplasmic reticulum membrane into vesicles and the selection of cargo molecules for their transport to the Golgi complex. The polypeptide is Protein transport protein Sec23B (Pongo abelii (Sumatran orangutan)).